Reading from the N-terminus, the 119-residue chain is NADH-quinone oxidoreductase subunit A (119 aa).

3 consecutive transmembrane segments (helical) span residues 7 to 27 (FPVL…MSIG), 63 to 83 (LIAI…PWGV), and 88 to 108 (IGWP…VGFV).

This sequence belongs to the complex I subunit 3 family. NDH-1 is composed of 14 different subunits. Subunits NuoA, H, J, K, L, M, N constitute the membrane sector of the complex.

It is found in the cell inner membrane. It carries out the reaction a quinone + NADH + 5 H(+)(in) = a quinol + NAD(+) + 4 H(+)(out). Functionally, NDH-1 shuttles electrons from NADH, via FMN and iron-sulfur (Fe-S) centers, to quinones in the respiratory chain. The immediate electron acceptor for the enzyme in this species is believed to be ubiquinone. Couples the redox reaction to proton translocation (for every two electrons transferred, four hydrogen ions are translocated across the cytoplasmic membrane), and thus conserves the redox energy in a proton gradient. The polypeptide is NADH-quinone oxidoreductase subunit A (Cupriavidus pinatubonensis (strain JMP 134 / LMG 1197) (Cupriavidus necator (strain JMP 134))).